We begin with the raw amino-acid sequence, 321 residues long: Olfactory receptor 5K4 (321 aa).

Topologically, residues 1–25 (MARENHSLAAEFILIGFTNYPELKT) are extracellular. Asparagine 5 carries N-linked (GlcNAc...) asparagine glycosylation. A helical transmembrane segment spans residues 26–46 (LLFVVFSAIYLVTMVGNLGLV). Over 47 to 54 (ALIYVERR) the chain is Cytoplasmic. A helical membrane pass occupies residues 55-75 (LLTPMYIFLGNLALMDSCCSC). The Extracellular segment spans residues 76–97 (AVTPKMLENFFSEDRIISLYEC). Residues cysteine 97 and cysteine 179 are joined by a disulfide bond. Residues 98–118 (MAQFYFLCLAETTDCFLLATM) traverse the membrane as a helical segment. The Cytoplasmic portion of the chain corresponds to 119 to 139 (AYDRYVAICHPLQYHTMMSKT). The helical transmembrane segment at 140–160 (LCIRMTTGAFKAGNLHSMIHV) threads the bilayer. At 161 to 205 (GLLLRLTFCRSNKIHHFFCDILPLYRLSCTDPSINELMIYIFSIP) the chain is on the extracellular side. Residues 206-226 (IQIFTIATVLISYLCILLTVF) form a helical membrane-spanning segment. At 227 to 240 (KMKSKEGRGKAFST) the chain is on the cytoplasmic side. The helical transmembrane segment at 241–261 (CASHFLSVSIFYICLLMYIGP) threads the bilayer. The Extracellular portion of the chain corresponds to 262 to 268 (SEEGDKD). Residues 269-289 (TPVAIFYAIVIPLLNPFIYSL) form a helical membrane-spanning segment. At 290-321 (RNKEVINVLKKIMRNYNILKQTCSIANLFLIY) the chain is on the cytoplasmic side.

The protein belongs to the G-protein coupled receptor 1 family.

It is found in the cell membrane. Its function is as follows. Odorant receptor. The polypeptide is Olfactory receptor 5K4 (OR5K4) (Homo sapiens (Human)).